Here is an 841-residue protein sequence, read N- to C-terminus: Potassium transport protein 1 (841 aa).

2 helical membrane-spanning segments follow: residues 24–44 and 80–100; these read YIYI…GGTT and ILYG…ISFI. Residues Asn116 and Asn164 are each glycosylated (N-linked (GlcNAc...) asparagine). Positions 173 to 192 are disordered; the sequence is STNNPYFPDNPPSPKADISK. N-linked (GlcNAc...) asparagine glycans are attached at residues Asn215 and Asn401. 7 consecutive transmembrane segments (helical) span residues 469 to 489, 507 to 527, 537 to 557, 600 to 620, 662 to 682, 715 to 735, and 747 to 767; these read MVTL…IVFA, GWWA…SLIP, IFLL…FPCF, WVLF…FMVL, AVLV…AINM, LSYD…CEGG, and IFTV…STGL. N-linked (GlcNAc...) asparagine glycosylation occurs at Asn771.

The protein belongs to the TrkH potassium transport family.

It localises to the cell membrane. Its function is as follows. Together with TRK2, defines the major, high-affinity potassium influx transport system. Involved in maintenance of the proper sodium/potassium ratio in the cell and in regulating the plasma membrane potential. This Schizosaccharomyces pombe (strain 972 / ATCC 24843) (Fission yeast) protein is Potassium transport protein 1 (trk1).